The sequence spans 146 residues: Meiotically up-regulated gene 96 protein (146 aa).

The helical transmembrane segment at 85–104 (LIRYSLILTCLVAILLSVLW) threads the bilayer.

Its subcellular location is the cytoplasm. The protein localises to the membrane. In terms of biological role, has a role in meiosis. The sequence is that of Meiotically up-regulated gene 96 protein (mug96) from Schizosaccharomyces pombe (strain 972 / ATCC 24843) (Fission yeast).